The sequence spans 491 residues: Beta-galactosidase (491 aa).

Residue E209 is the Proton donor of the active site. E389 serves as the catalytic Nucleophile.

Belongs to the glycosyl hydrolase 1 family.

The catalysed reaction is Hydrolysis of terminal non-reducing beta-D-galactose residues in beta-D-galactosides.. The protein is Beta-galactosidase (bgaS) of Sulfolobus acidocaldarius (strain ATCC 33909 / DSM 639 / JCM 8929 / NBRC 15157 / NCIMB 11770).